Consider the following 439-residue polypeptide: Xylose isomerase (439 aa).

Catalysis depends on residues His103 and Asp106. 7 residues coordinate Mg(2+): Glu234, Glu270, His273, Asp298, Asp309, Asp311, and Asp341.

This sequence belongs to the xylose isomerase family. Homotetramer. The cofactor is Mg(2+).

It localises to the cytoplasm. The catalysed reaction is alpha-D-xylose = alpha-D-xylulofuranose. This is Xylose isomerase from Bacteroides fragilis (strain YCH46).